The chain runs to 269 residues: Seven in absentia homolog 3 (269 aa).

The segment at 61–132 (GSFHPHHLSH…VVPHLRQIHR (72 aa)) adopts an SIAH-type; degenerate zinc-finger fold. Residues C107, C114, H126, and H131 each coordinate Zn(2+).

The protein belongs to the SINA (Seven in absentia) family.

The protein resides in the mitochondrion. In terms of biological role, negative regulator of PRKN translocation to damaged mitochondria. Acts probably by destabilizing PINK1 protein, hence inhibiting PRKN targeting to dysfunctional depolarized mitochondria. In Homo sapiens (Human), this protein is Seven in absentia homolog 3 (SIAH3).